A 128-amino-acid polypeptide reads, in one-letter code: MSRSLGIPVKLLHESSGHIVSVEMKSGELYRGSMIECEDNWNCQLENITYTAKDGKVSQLEHVFIRGSLVRFLVIPDMLKNAPMFKDVRGKGKSASLGVGRGRGAAMRAKGTGRGTGGGRGAVPPVRR.

Residues 7–79 enclose the Sm domain; that stretch reads IPVKLLHESS…VRFLVIPDML (73 aa). Positions 90 to 128 are disordered; sequence GKGKSASLGVGRGRGAAMRAKGTGRGTGGGRGAVPPVRR. Residues 112–121 are compositionally biased toward gly residues; sequence TGRGTGGGRG.

The protein belongs to the snRNP core protein family. In terms of tissue distribution, expressed in young seedlings, roots, leaves, flowers and immature siliques.

It localises to the cytoplasm. It is found in the cytosol. The protein resides in the nucleus. In terms of biological role, core component of the spliceosomal U1, U2, U4 and U5 small nuclear ribonucleoproteins (snRNPs), the building blocks of the spliceosome. May play a minor role in the splicing of cellular pre-mRNAs. The protein is Small nuclear ribonucleoprotein SmD3a of Arabidopsis thaliana (Mouse-ear cress).